A 516-amino-acid polypeptide reads, in one-letter code: GMP synthase [glutamine-hydrolyzing] (516 aa).

One can recognise a Glutamine amidotransferase type-1 domain in the interval 8–198; that stretch reads KILILDFGSQ…VVNICGCDTL (191 aa). Cys-84 serves as the catalytic Nucleophile. Catalysis depends on residues His-172 and Glu-174. Positions 199-391 constitute a GMPS ATP-PPase domain; it reads WNIENIIEND…LGLPYNMLYR (193 aa). Position 226–232 (226–232) interacts with ATP; that stretch reads SGGVDSS.

In terms of assembly, homodimer.

The enzyme catalyses XMP + L-glutamine + ATP + H2O = GMP + L-glutamate + AMP + diphosphate + 2 H(+). It functions in the pathway purine metabolism; GMP biosynthesis; GMP from XMP (L-Gln route): step 1/1. Catalyzes the synthesis of GMP from XMP. This chain is GMP synthase [glutamine-hydrolyzing], found in Francisella tularensis subsp. tularensis (strain FSC 198).